The sequence spans 586 residues: Ferredoxin--nitrite reductase, chloroplastic (586 aa).

Low complexity predominate over residues 1–18; that stretch reads MTSFSLTFTSPLLPSSST. The disordered stretch occupies residues 1 to 20; sequence MTSFSLTFTSPLLPSSSTKP. Residues 1-25 constitute a chloroplast transit peptide; that stretch reads MTSFSLTFTSPLLPSSSTKPKRSVL. Residue lysine 103 forms a Glycyl lysine isopeptide (Lys-Gly) (interchain with G-Cter in ubiquitin) linkage. [4Fe-4S] cluster is bound by residues cysteine 464, cysteine 470, cysteine 505, and cysteine 509. Residue cysteine 509 coordinates siroheme.

It belongs to the nitrite and sulfite reductase 4Fe-4S domain family. As to quaternary structure, monomer. Requires siroheme as cofactor. It depends on [4Fe-4S] cluster as a cofactor.

It localises to the plastid. The protein localises to the chloroplast. The enzyme catalyses 6 oxidized [2Fe-2S]-[ferredoxin] + NH4(+) + 2 H2O = nitrite + 6 reduced [2Fe-2S]-[ferredoxin] + 8 H(+). It participates in nitrogen metabolism; nitrate reduction (assimilation). Catalyzes the six-electron reduction of nitrite to ammonium. This Arabidopsis thaliana (Mouse-ear cress) protein is Ferredoxin--nitrite reductase, chloroplastic (NIR1).